Reading from the N-terminus, the 89-residue chain is MRSAFAVLFLALIAITYSKNYEDVKEEIKNEVENEILKDLEEDVNEFDDNVQEEVNDARPLRRFFRRIRGRKLLPYVPTAIKLWNLGKK.

An N-terminal signal peptide occupies residues 1–18; it reads MRSAFAVLFLALIAITYS. Residues 19 to 58 constitute a propeptide that is removed on maturation; the sequence is KNYEDVKEEIKNEVENEILKDLEEDVNEFDDNVQEEVNDA. L86 is subject to Leucine amide.

The protein belongs to the arminin family. As to expression, expressed in entodermal epithelium along the body column.

It is found in the secreted. The protein resides in the target cell membrane. Its function is as follows. Antimicrobial peptide with a broad-spectrum antimicrobial activity. Keeps its antibacterial activity under a wide range of salt concentrations that mimic physiological conditions of human blood, which is surprising, since Hydra is an obligate freshwater animal with nearly no salt tolerance. Does not affect red blood cells. This Hydra vulgaris (Hydra) protein is Arminin 7591.